The sequence spans 97 residues: Large ribosomal subunit protein eL21 (97 aa).

It belongs to the eukaryotic ribosomal protein eL21 family.

This chain is Large ribosomal subunit protein eL21, found in Methanococcoides burtonii (strain DSM 6242 / NBRC 107633 / OCM 468 / ACE-M).